The following is a 797-amino-acid chain: Xaa-Pro dipeptidyl-peptidase (797 aa).

Residues serine 370, aspartate 490, and histidine 521 each act as charge relay system in the active site.

It belongs to the peptidase S15 family. As to quaternary structure, homodimer.

The protein localises to the cytoplasm. The enzyme catalyses Hydrolyzes Xaa-Pro-|- bonds to release unblocked, N-terminal dipeptides from substrates including Ala-Pro-|-p-nitroanilide and (sequentially) Tyr-Pro-|-Phe-Pro-|-Gly-Pro-|-Ile.. Removes N-terminal dipeptides sequentially from polypeptides having unsubstituted N-termini provided that the penultimate residue is proline. This Lacticaseibacillus casei (strain BL23) (Lactobacillus casei) protein is Xaa-Pro dipeptidyl-peptidase.